A 129-amino-acid chain; its full sequence is Phosphoribosyl-AMP cyclohydrolase (129 aa).

Asp76 contacts Mg(2+). Cys77 serves as a coordination point for Zn(2+). Residues Asp78 and Asp80 each contribute to the Mg(2+) site. Zn(2+)-binding residues include Cys97 and Cys104.

It belongs to the PRA-CH family. As to quaternary structure, homodimer. Requires Mg(2+) as cofactor. Zn(2+) serves as cofactor.

It localises to the cytoplasm. It catalyses the reaction 1-(5-phospho-beta-D-ribosyl)-5'-AMP + H2O = 1-(5-phospho-beta-D-ribosyl)-5-[(5-phospho-beta-D-ribosylamino)methylideneamino]imidazole-4-carboxamide. It participates in amino-acid biosynthesis; L-histidine biosynthesis; L-histidine from 5-phospho-alpha-D-ribose 1-diphosphate: step 3/9. Functionally, catalyzes the hydrolysis of the adenine ring of phosphoribosyl-AMP. In Verminephrobacter eiseniae (strain EF01-2), this protein is Phosphoribosyl-AMP cyclohydrolase.